A 216-amino-acid chain; its full sequence is MRIGILGGTFNPIHNAHLRIAEEVRDRLDLERVMFVPAASPPHKLLAGELSFEVRYEMVRLAIADNPFFTISDIEGKRGGTSYSIHTLQELHLAYPADEFFFIIGSDSFLDIGSWKEYAAIFNLCNIVVVSRPGAVADPLDKALPVAIADRFCYHAAEKRLTHSSGHSVYSIAGTLLDISSSEIRTLTRQGRSIRYLLPATVEQYIKEQRIYNDGR.

Belongs to the NadD family.

The enzyme catalyses nicotinate beta-D-ribonucleotide + ATP + H(+) = deamido-NAD(+) + diphosphate. The protein operates within cofactor biosynthesis; NAD(+) biosynthesis; deamido-NAD(+) from nicotinate D-ribonucleotide: step 1/1. Functionally, catalyzes the reversible adenylation of nicotinate mononucleotide (NaMN) to nicotinic acid adenine dinucleotide (NaAD). This chain is Probable nicotinate-nucleotide adenylyltransferase, found in Geotalea daltonii (strain DSM 22248 / JCM 15807 / FRC-32) (Geobacter daltonii).